Here is a 262-residue protein sequence, read N- to C-terminus: MKAVATVFICGSLVLITYLPLVVTSPQTLAIPEKLRQAVGRVVVNATACSVTCGLGYKEETSCEVGPDGVRRDCRSQRLECLTNWICGMLHFTIIQRQQFELNCLSSDILTKGQEAFRFTWKLARGIISTNDELFKPFRANSPFLRFKPAYESDSGTYRCDVQQLKNLKLVKRLYFGLRVLPPKLVNLNFQQSLTEDQKLAEEGWEVHLDNQSQPHLPGWRKKVSLALGVGIAAGVVGGVLVNVALCRVLGGTGGNGNLSSL.

The N-terminal stretch at 1–30 (MKAVATVFICGSLVLITYLPLVVTSPQTLA) is a signal peptide. Over 31 to 225 (IPEKLRQAVG…HLPGWRKKVS (195 aa)) the chain is Extracellular. Asparagine 45 is a glycosylation site (N-linked (GlcNAc...) asparagine). The Ig-like domain occupies 83–171 (TNWICGMLHF…VQQLKNLKLV (89 aa)). Residues cysteine 104 and cysteine 160 are joined by a disulfide bond. N-linked (GlcNAc...) asparagine glycosylation occurs at asparagine 211. The helical transmembrane segment at 226–246 (LALGVGIAAGVVGGVLVNVAL) threads the bilayer. The Cytoplasmic portion of the chain corresponds to 247 to 262 (CRVLGGTGGNGNLSSL).

In terms of assembly, forms a complex with IZUMO1 and SPACA6 on spermatocyte cell membrane required for fertilization.

It localises to the cell membrane. Its function is as follows. Essential fertilization factor required for male fertility. Part of a conserved trimeric sperm complex with the essential fertilization factors IZUMO1 and SPACA6 which bridges sperm and oocyte membranes during fertilization by binding to IZUMO1R/JUNO on the oocyte. The polypeptide is Transmembrane protein 81 (Tmem81) (Rattus norvegicus (Rat)).